Consider the following 293-residue polypeptide: 4-hydroxy-tetrahydrodipicolinate synthase (293 aa).

A pyruvate-binding site is contributed by Thr-46. Residue Tyr-134 is the Proton donor/acceptor of the active site. Lys-162 acts as the Schiff-base intermediate with substrate in catalysis. Pyruvate is bound at residue Ile-204.

Belongs to the DapA family. In terms of assembly, homotetramer; dimer of dimers.

The protein resides in the cytoplasm. It carries out the reaction L-aspartate 4-semialdehyde + pyruvate = (2S,4S)-4-hydroxy-2,3,4,5-tetrahydrodipicolinate + H2O + H(+). It functions in the pathway amino-acid biosynthesis; L-lysine biosynthesis via DAP pathway; (S)-tetrahydrodipicolinate from L-aspartate: step 3/4. Functionally, catalyzes the condensation of (S)-aspartate-beta-semialdehyde [(S)-ASA] and pyruvate to 4-hydroxy-tetrahydrodipicolinate (HTPA). This is 4-hydroxy-tetrahydrodipicolinate synthase from Bdellovibrio bacteriovorus (strain ATCC 15356 / DSM 50701 / NCIMB 9529 / HD100).